Reading from the N-terminus, the 420-residue chain is MVDAADSKSAGHWSWGFKSPGSHPEAVMNTYNRFPLTLVRGRGCWVWDDQGRRHLDAVAGIATDTLGHSDRALRRSLGRQLRRLQHVSNLYRIPEQDALATWLVQHSCADSVFFCNSGAEANEAAIKLARKHGHLKRGIDRPRILTASASFHGRTLAAVSATGQPRYHQGFEPMVEGFDYFPYNDIHAFESLLERHEANGPAVAAVLLEPLQGEGGVHPGDAGFFQRLRHLCSERNILLILDEVQVGMGRSGRLWGYEQLGIEPDAFTLAKGLGGGHAIGALLVNAKADVFEPGDHASTFGGNPFACTAGLTVAQEIQRRGLLRNVEERGQQLQQGIQGLVARYPQLLQGVRGWGLLQGLVLHQDCGVTAPQLAKAAIEQRLLLVAAGATVLRMVPPLVISANEVRQLLRRLDATLAELV.

Residues 118-119 and Phe-151 contribute to the pyridoxal 5'-phosphate site; that span reads GA. Arg-154 provides a ligand contact to N(2)-acetyl-L-ornithine. Residue 242-245 coordinates pyridoxal 5'-phosphate; the sequence is DEVQ. The residue at position 271 (Lys-271) is an N6-(pyridoxal phosphate)lysine. Ser-298 provides a ligand contact to N(2)-acetyl-L-ornithine. Pyridoxal 5'-phosphate is bound at residue Thr-299.

Belongs to the class-III pyridoxal-phosphate-dependent aminotransferase family. ArgD subfamily. In terms of assembly, homodimer. It depends on pyridoxal 5'-phosphate as a cofactor.

It is found in the cytoplasm. The catalysed reaction is N(2)-acetyl-L-ornithine + 2-oxoglutarate = N-acetyl-L-glutamate 5-semialdehyde + L-glutamate. It functions in the pathway amino-acid biosynthesis; L-arginine biosynthesis; N(2)-acetyl-L-ornithine from L-glutamate: step 4/4. The polypeptide is Acetylornithine aminotransferase (Parasynechococcus marenigrum (strain WH8102)).